A 690-amino-acid polypeptide reads, in one-letter code: Glycine--tRNA ligase beta subunit (690 aa).

This sequence belongs to the class-II aminoacyl-tRNA synthetase family. As to quaternary structure, tetramer of two alpha and two beta subunits.

The protein resides in the cytoplasm. The catalysed reaction is tRNA(Gly) + glycine + ATP = glycyl-tRNA(Gly) + AMP + diphosphate. This Desulfatibacillum aliphaticivorans protein is Glycine--tRNA ligase beta subunit.